The chain runs to 118 residues: MTSYTFTRELRLLTPAQFKSVFSNPIKASSAEITLLAIPNSEQHPRLGLTVAKRYVKRANQRNRIKRVIRDSFRLNQHNIPHLDIVVLVRNGVMEMENAELNKLIEKLWRKLSRRYNG.

This sequence belongs to the RnpA family. As to quaternary structure, consists of a catalytic RNA component (M1 or rnpB) and a protein subunit.

It catalyses the reaction Endonucleolytic cleavage of RNA, removing 5'-extranucleotides from tRNA precursor.. Its function is as follows. RNaseP catalyzes the removal of the 5'-leader sequence from pre-tRNA to produce the mature 5'-terminus. It can also cleave other RNA substrates such as 4.5S RNA. The protein component plays an auxiliary but essential role in vivo by binding to the 5'-leader sequence and broadening the substrate specificity of the ribozyme. This is Ribonuclease P protein component from Shewanella oneidensis (strain ATCC 700550 / JCM 31522 / CIP 106686 / LMG 19005 / NCIMB 14063 / MR-1).